Consider the following 459-residue polypeptide: Argininosuccinate lyase (459 aa).

This sequence belongs to the lyase 1 family. Argininosuccinate lyase subfamily.

The protein resides in the cytoplasm. The catalysed reaction is 2-(N(omega)-L-arginino)succinate = fumarate + L-arginine. Its pathway is amino-acid biosynthesis; L-arginine biosynthesis; L-arginine from L-ornithine and carbamoyl phosphate: step 3/3. The sequence is that of Argininosuccinate lyase from Chromobacterium violaceum (strain ATCC 12472 / DSM 30191 / JCM 1249 / CCUG 213 / NBRC 12614 / NCIMB 9131 / NCTC 9757 / MK).